Here is a 780-residue protein sequence, read N- to C-terminus: Ino eighty subunit 1 (780 aa).

2 disordered regions span residues 1-25 (MADVESAGVDDSFAQSEPHDEQQIH) and 563-780 (ANGP…PGWN). The span at 563 to 584 (ANGPRRDRKKEREERQKAREEA) shows a compositional bias: basic and acidic residues. Over residues 600–613 (SRARAQRNAKRKLA) the composition is skewed to basic residues. A compositionally biased stretch (low complexity) spans 614–635 (RAAAAASSTPSASTPKTAAARS). 2 stretches are compositionally biased toward acidic residues: residues 676 to 686 (LEGEESLDDID) and 723 to 751 (DADDALSSDEEEEEAEDEELDEMDVEGDD).

In terms of assembly, component of the chromatin-remodeling INO80 complex.

The protein resides in the nucleus. Its function is as follows. Probably involved in transcription regulation via its interaction with the INO80 complex, a chromatin-remodeling complex. The protein is Ino eighty subunit 1 of Emericella nidulans (strain FGSC A4 / ATCC 38163 / CBS 112.46 / NRRL 194 / M139) (Aspergillus nidulans).